The sequence spans 344 residues: Mycothiol acetyltransferase (344 aa).

Glu36 is a 1D-myo-inositol 2-(L-cysteinylamino)-2-deoxy-alpha-D-glucopyranoside binding site. N-acetyltransferase domains lie at 40–179 and 187–344; these read LALR…TPLP and VTVR…PSTG. The interval 61-83 is disordered; the sequence is ADTSGPNVPDTPGDQNAADTSTM. Residues 73–83 show a composition bias toward polar residues; sequence GDQNAADTSTM. Residue 109 to 111 coordinates acetyl-CoA; sequence VVV. 1D-myo-inositol 2-(L-cysteinylamino)-2-deoxy-alpha-D-glucopyranoside is bound by residues Glu214, Lys253, and Glu272. Acetyl-CoA is bound by residues 276–278 and 283–289; these read VGV and GGAGLGR. A 1D-myo-inositol 2-(L-cysteinylamino)-2-deoxy-alpha-D-glucopyranoside-binding site is contributed by Tyr310. Position 315–320 (315–320) interacts with acetyl-CoA; the sequence is NVRAVR.

The protein belongs to the acetyltransferase family. MshD subfamily. In terms of assembly, monomer.

The catalysed reaction is 1D-myo-inositol 2-(L-cysteinylamino)-2-deoxy-alpha-D-glucopyranoside + acetyl-CoA = mycothiol + CoA + H(+). Functionally, catalyzes the transfer of acetyl from acetyl-CoA to desacetylmycothiol (Cys-GlcN-Ins) to form mycothiol. The protein is Mycothiol acetyltransferase of Frankia casuarinae (strain DSM 45818 / CECT 9043 / HFP020203 / CcI3).